Here is a 334-residue protein sequence, read N- to C-terminus: Ornithine carbamoyltransferase (334 aa).

Carbamoyl phosphate is bound by residues 57-60, glutamine 84, arginine 108, and 135-138; these read STRT and HPTQ. L-ornithine is bound by residues asparagine 169, aspartate 233, and 237–238; that span reads SM. Carbamoyl phosphate-binding positions include 275-276 and arginine 320; that span reads CL.

The protein belongs to the aspartate/ornithine carbamoyltransferase superfamily. OTCase family.

The protein resides in the cytoplasm. It catalyses the reaction carbamoyl phosphate + L-ornithine = L-citrulline + phosphate + H(+). It participates in amino-acid biosynthesis; L-arginine biosynthesis; L-arginine from L-ornithine and carbamoyl phosphate: step 1/3. In terms of biological role, reversibly catalyzes the transfer of the carbamoyl group from carbamoyl phosphate (CP) to the N(epsilon) atom of ornithine (ORN) to produce L-citrulline. In Aeromonas salmonicida (strain A449), this protein is Ornithine carbamoyltransferase.